The sequence spans 1486 residues: Chromosome partition protein MukB (1486 aa).

An ATP-binding site is contributed by 34-41; that stretch reads GGNGAGKS. 3 coiled-coil regions span residues 326–418, 444–480, and 509–603; these read LEAD…QYNQ, LETF…QAYQ, and RHLA…RAPV. Positions 666–783 are flexible hinge; it reads PGGSEDQRLN…EVPLFGRAAR (118 aa). Coiled coils occupy residues 835 to 923, 977 to 1115, and 1209 to 1266; these read EAEI…AKLE, EMLS…TAKA, and VEAI…QNVS.

Belongs to the SMC family. MukB subfamily. As to quaternary structure, homodimerization via its hinge domain. Binds to DNA via its C-terminal region. Interacts, and probably forms a ternary complex, with MukE and MukF via its C-terminal region. The complex formation is stimulated by calcium or magnesium. Interacts with tubulin-related protein FtsZ.

The protein resides in the cytoplasm. It localises to the nucleoid. In terms of biological role, plays a central role in chromosome condensation, segregation and cell cycle progression. Functions as a homodimer, which is essential for chromosome partition. Involved in negative DNA supercoiling in vivo, and by this means organize and compact chromosomes. May achieve or facilitate chromosome segregation by condensation DNA from both sides of a centrally located replisome during cell division. The sequence is that of Chromosome partition protein MukB from Escherichia coli (strain ATCC 8739 / DSM 1576 / NBRC 3972 / NCIMB 8545 / WDCM 00012 / Crooks).